Here is a 396-residue protein sequence, read N- to C-terminus: 8-amino-7-oxononanoate synthase (396 aa).

R21 is a substrate binding site. 108 to 109 (GY) is a binding site for pyridoxal 5'-phosphate. H133 lines the substrate pocket. The pyridoxal 5'-phosphate site is built by S179, H207, and T236. K239 carries the post-translational modification N6-(pyridoxal phosphate)lysine. Residue T353 participates in substrate binding.

This sequence belongs to the class-II pyridoxal-phosphate-dependent aminotransferase family. BioF subfamily. As to quaternary structure, homodimer. The cofactor is pyridoxal 5'-phosphate.

The catalysed reaction is 6-carboxyhexanoyl-[ACP] + L-alanine + H(+) = (8S)-8-amino-7-oxononanoate + holo-[ACP] + CO2. It functions in the pathway cofactor biosynthesis; biotin biosynthesis. Its function is as follows. Catalyzes the decarboxylative condensation of pimeloyl-[acyl-carrier protein] and L-alanine to produce 8-amino-7-oxononanoate (AON), [acyl-carrier protein], and carbon dioxide. The sequence is that of 8-amino-7-oxononanoate synthase from Hahella chejuensis (strain KCTC 2396).